A 208-amino-acid chain; its full sequence is Outer-membrane lipoprotein carrier protein (208 aa).

The N-terminal stretch at 1-25 is a signal peptide; the sequence is MKKRFSAKLFSALVLSISFFSAANA.

This sequence belongs to the LolA family. As to quaternary structure, monomer.

The protein resides in the periplasm. In terms of biological role, participates in the translocation of lipoproteins from the inner membrane to the outer membrane. Only forms a complex with a lipoprotein if the residue after the N-terminal Cys is not an aspartate (The Asp acts as a targeting signal to indicate that the lipoprotein should stay in the inner membrane). This is Outer-membrane lipoprotein carrier protein from Vibrio parahaemolyticus serotype O3:K6 (strain RIMD 2210633).